Here is a 416-residue protein sequence, read N- to C-terminus: UBX domain-containing protein 4 (416 aa).

The UBX domain occupies 273-350 (KAISECLLRV…EFGSKTMLLF (78 aa)). Residues 376–402 (TRTTPSVNTINKSNPQGPSDNATSIKK) are disordered. The segment covering 378-402 (TTPSVNTINKSNPQGPSDNATSIKK) has biased composition (polar residues).

Its subcellular location is the nucleus. The protein resides in the cytoplasm. Functionally, involved in CDC48-dependent protein degradation through the ubiquitin/proteasome pathway. In Saccharomyces cerevisiae (strain ATCC 204508 / S288c) (Baker's yeast), this protein is UBX domain-containing protein 4 (UBX4).